Reading from the N-terminus, the 501-residue chain is O-phosphoseryl-tRNA(Sec) selenium transferase (501 aa).

The segment at 1 to 44 (MNRESFAAGERLVSPAYVRQGCEARRSHEHLIRLLLEKGKCPEN) is tetramerization. The residue at position 14 (S14) is a Phosphoserine. A pyridoxal 5'-phosphate-binding site is contributed by R75. The phosphate loop (P-loop) stretch occupies residues 96-106 (GRSGDISAVQP). The substrate site is built by R97, S98, and Q105. R271 contacts tRNA. K284 is modified (N6-(pyridoxal phosphate)lysine). R313 contacts substrate. Residues R398 and K463 each coordinate tRNA. The SLA/LP epitope stretch occupies residues 474 to 493 (DKTEDVDIEEMALKLDNVLL).

The protein belongs to the SepSecS family. Homotetramer formed by a catalytic dimer and a non-catalytic dimer serving as a binding platform that orients tRNASec for catalysis. Each tetramer binds the CCA ends of two tRNAs which point to the active sites of the catalytic dimer. Pyridoxal 5'-phosphate serves as cofactor. Primarily expressed in liver, pancreas, kidney and lung. Overexpressed in PHA-stimulated T-cells.

The protein localises to the cytoplasm. It catalyses the reaction O-phospho-L-seryl-tRNA(Sec) + selenophosphate + H2O = L-selenocysteinyl-tRNA(Sec) + 2 phosphate. It participates in aminoacyl-tRNA biosynthesis; selenocysteinyl-tRNA(Sec) biosynthesis; selenocysteinyl-tRNA(Sec) from L-seryl-tRNA(Sec) (archaeal/eukaryal route): step 2/2. Its function is as follows. Converts O-phosphoseryl-tRNA(Sec) to selenocysteinyl-tRNA(Sec) required for selenoprotein biosynthesis. The chain is O-phosphoseryl-tRNA(Sec) selenium transferase (SEPSECS) from Homo sapiens (Human).